A 324-amino-acid polypeptide reads, in one-letter code: Polyprenol dehydrogenase (324 aa).

Tyr206 acts as the Proton acceptor in catalysis. Tyr206, Lys210, and Thr243 together coordinate NAD(+).

The protein belongs to the short-chain dehydrogenases/reductases (SDR) family.

The protein resides in the lipid droplet. It carries out the reaction a di-trans,poly-cis-polyprenol + NAD(+) = a di-trans,poly-cis-polyprenal + NADH + H(+). The enzyme catalyses a di-trans,poly-cis-polyprenol + NADP(+) = a di-trans,poly-cis-polyprenal + NADPH + H(+). It catalyses the reaction a di-trans,poly-cis-dolichol + NADP(+) = a di-trans,poly-cis-dolichal + NADPH + H(+). The catalysed reaction is a di-trans,poly-cis-dolichol + NAD(+) = a di-trans,poly-cis-dolichal + NADH + H(+). It functions in the pathway protein modification; protein glycosylation. In terms of biological role, oxidoreductase that plays a key role in early steps of protein N-linked glycosylation by mediating two non-consecutive steps in dolichol biosynthesis. Acts both as a NAD(+)-dependent dehydrogenase and as a NADPH-dependent reductase during the conversion of polyprenol into dolichol. First catalyzes the NAD(+)-dependent dehydrogenation of polyprenol into polyprenal; polyprenal is then reduced into dolichal by srd5a3. It then catalyzes the NADPH-dependent reduction of dolichal into dolichol. The chain is Polyprenol dehydrogenase from Danio rerio (Zebrafish).